The chain runs to 504 residues: Probable cytosol aminopeptidase (504 aa).

2 residues coordinate Mn(2+): lysine 272 and aspartate 277. Residue lysine 284 is part of the active site. The Mn(2+) site is built by aspartate 295, aspartate 354, and glutamate 356. The active site involves arginine 358.

It belongs to the peptidase M17 family. Mn(2+) serves as cofactor.

It localises to the cytoplasm. It carries out the reaction Release of an N-terminal amino acid, Xaa-|-Yaa-, in which Xaa is preferably Leu, but may be other amino acids including Pro although not Arg or Lys, and Yaa may be Pro. Amino acid amides and methyl esters are also readily hydrolyzed, but rates on arylamides are exceedingly low.. The enzyme catalyses Release of an N-terminal amino acid, preferentially leucine, but not glutamic or aspartic acids.. In terms of biological role, presumably involved in the processing and regular turnover of intracellular proteins. Catalyzes the removal of unsubstituted N-terminal amino acids from various peptides. This Chlorobaculum tepidum (strain ATCC 49652 / DSM 12025 / NBRC 103806 / TLS) (Chlorobium tepidum) protein is Probable cytosol aminopeptidase.